We begin with the raw amino-acid sequence, 165 residues long: P2Y purinoceptor 4 (165 aa).

The helical transmembrane segment at 1–16 threads the bilayer; it reads SDTLYVLSLPTLVYYY. Residues 17 to 30 are Extracellular-facing; the sequence is AARNHWPFGTGFCK. A helical transmembrane segment spans residues 31-51; sequence FVRFLFYWNLYCSVLFLTCIS. Residues 52–74 lie on the Cytoplasmic side of the membrane; the sequence is VHRYMGICHPLRALRWGRPRFAS. The chain crosses the membrane as a helical span at residues 75–95; the sequence is LLCLAVWLVVAGCLVPNLFFV. Residues 96-124 are Extracellular-facing; sequence TTSPNGTTILCHDTTRPEEFDHYVHFSSA. Residue asparagine 100 is glycosylated (N-linked (GlcNAc...) asparagine). The chain crosses the membrane as a helical span at residues 125–145; sequence VMVLLFGLPFLVTLVCYGLMA. The Cytoplasmic segment spans residues 146-165; that stretch reads RRLYRPLPGAGQSSSRLRSL.

Belongs to the G-protein coupled receptor 1 family.

It is found in the cell membrane. Receptor for UTP and UDP coupled to G-proteins that activate a phosphatidylinositol-calcium second messenger system. The protein is P2Y purinoceptor 4 (P2RY4) of Cricetulus griseus (Chinese hamster).